Consider the following 1042-residue polypeptide: FHIP family protein AAEL005291 (1042 aa).

Over residues 1 to 14 (MSWLRSSPLRQSFS) the composition is skewed to polar residues. Disordered regions lie at residues 1–31 (MSWL…GGNS), 494–514 (NNTS…PQGG), 821–866 (PHSG…KRND), and 905–977 (SNSS…GSPH). Residues 839–859 (VSMTSNLSQTTPMQLTPSSSY) are compositionally biased toward polar residues. 2 stretches are compositionally biased toward low complexity: residues 905–940 (SNSS…FMGS) and 956–976 (PSIG…TGSP).

It belongs to the FHIP family.

The polypeptide is FHIP family protein AAEL005291 (Aedes aegypti (Yellowfever mosquito)).